The following is a 314-amino-acid chain: MTMIGPIIIAVLIIIFLIVFFTLVPVGLWISALSARVPVGLGTLIGMRLRRVVPSRVVKPLIKAVKAGLDLEVNQLESHYLAGGDVDNTVDALIAAHRANIELDFSRAAAIDLAGRDVLEAVQTSVTPKVIRTPEFTGVAQNGVEVKVITQITVQSNIERIVGGAGEDTVIARVGEAVVSTVGETREHTDVLENPNSISKKVQEQGLGDGTAYTILSIDIAEMRIGDNIKAKLDIEKANADMEVAQAAASKRKAEAIALEQENRAAVVAAEAEVPRALSRALEEGNLGVMDYYKMENVQSDTAMRESIAHEDEK.

Residues 4 to 24 (IGPIIIAVLIIIFLIVFFTLV) form a helical membrane-spanning segment.

Belongs to the flotillin-like FloA family. As to quaternary structure, homooligomerizes.

It is found in the cell membrane. The protein localises to the membrane raft. Functionally, found in functional membrane microdomains (FMM) that may be equivalent to eukaryotic membrane rafts. FMMs are highly dynamic and increase in number as cells age. Flotillins are thought to be important factors in membrane fluidity. The chain is Flotillin-like protein FloA from Listeria innocua serovar 6a (strain ATCC BAA-680 / CLIP 11262).